A 355-amino-acid polypeptide reads, in one-letter code: Protein RecA (355 aa).

67 to 74 (GPESSGKT) lines the ATP pocket. Residues 335 to 355 (NSLVSDVESEDEGASESNEEF) are disordered. Positions 341–355 (VESEDEGASESNEEF) are enriched in acidic residues.

This sequence belongs to the RecA family.

Its subcellular location is the cytoplasm. Can catalyze the hydrolysis of ATP in the presence of single-stranded DNA, the ATP-dependent uptake of single-stranded DNA by duplex DNA, and the ATP-dependent hybridization of homologous single-stranded DNAs. It interacts with LexA causing its activation and leading to its autocatalytic cleavage. The polypeptide is Protein RecA (Sodalis glossinidius).